Here is a 338-residue protein sequence, read N- to C-terminus: N-acetylmuramate/N-acetylglucosamine kinase (338 aa).

It belongs to the kinase AmgK family.

It carries out the reaction N-acetyl-D-muramate + ATP = N-acetyl-alpha-D-muramate 1-phosphate + ADP + H(+). The catalysed reaction is N-acetyl-D-glucosamine + ATP = N-acetyl-alpha-D-glucosamine 1-phosphate + ADP + H(+). It participates in cell wall biogenesis; peptidoglycan recycling. Its function is as follows. Sugar kinase that catalyzes the ATP-dependent phosphorylation of N-acetylmuramate (MurNAc) and N-acetylglucosamine (GlcNAc) at its C1 hydroxyl group, leading to MurNAc alpha-1P and GlcNAc alpha-1P, respectively. Is involved in peptidoglycan recycling as part of a cell wall recycling pathway that bypasses de novo biosynthesis of the peptidoglycan precursor UDP-MurNAc. Plays a role in intrinsic resistance to fosfomycin, which targets the de novo synthesis of UDP-MurNAc. The sequence is that of N-acetylmuramate/N-acetylglucosamine kinase from Pseudomonas aeruginosa (strain ATCC 15692 / DSM 22644 / CIP 104116 / JCM 14847 / LMG 12228 / 1C / PRS 101 / PAO1).